The chain runs to 727 residues: Pentatricopeptide repeat-containing protein At4g20740 (727 aa).

The interval 1–84 (MKSPKPPNLS…PSPPSHSTVI (84 aa)) is disordered. Residues 38–56 (SNRQSIPRVSPQPQSNSLA) show a composition bias toward polar residues. A compositionally biased stretch (basic and acidic residues) spans 59 to 70 (TPFDLRKWDPET). 14 PPR repeats span residues 157 to 191 (DFAA…GRPP), 192 to 226 (SEKQ…GFKP), 227 to 261 (RVFL…GLVE), 262 to 296 (ESTT…LCKP), 297 to 331 (DVFA…EIKP), 332 to 366 (DVMA…QILI), 367 to 401 (DREI…GYIA), 402 to 436 (DIGI…ELEP), 437 to 471 (DFET…GYPV), 506 to 540 (SVSV…GFEP), 541 to 575 (DSSS…SCVP), 576 to 606 (SIAA…CLGN), 612 to 646 (MEFK…GVFI), and 647 to 681 (NEVI…KVMT).

This sequence belongs to the PPR family. P subfamily.

The protein is Pentatricopeptide repeat-containing protein At4g20740 of Arabidopsis thaliana (Mouse-ear cress).